Reading from the N-terminus, the 199-residue chain is ATP-dependent Clp protease proteolytic subunit (199 aa).

Ser99 functions as the Nucleophile in the catalytic mechanism. His124 is a catalytic residue.

This sequence belongs to the peptidase S14 family. Fourteen ClpP subunits assemble into 2 heptameric rings which stack back to back to give a disk-like structure with a central cavity, resembling the structure of eukaryotic proteasomes.

The protein resides in the cytoplasm. It catalyses the reaction Hydrolysis of proteins to small peptides in the presence of ATP and magnesium. alpha-casein is the usual test substrate. In the absence of ATP, only oligopeptides shorter than five residues are hydrolyzed (such as succinyl-Leu-Tyr-|-NHMec, and Leu-Tyr-Leu-|-Tyr-Trp, in which cleavage of the -Tyr-|-Leu- and -Tyr-|-Trp bonds also occurs).. Functionally, cleaves peptides in various proteins in a process that requires ATP hydrolysis. Has a chymotrypsin-like activity. Plays a major role in the degradation of misfolded proteins. This is ATP-dependent Clp protease proteolytic subunit from Lactococcus lactis subsp. cremoris (strain SK11).